A 401-amino-acid polypeptide reads, in one-letter code: Probable tRNA sulfurtransferase (401 aa).

The region spanning Glu60 to Asp165 is the THUMP domain. ATP-binding positions include Met183–Ile184, His208–Phe209, Arg265, Gly287, and Gln296.

This sequence belongs to the ThiI family.

Its subcellular location is the cytoplasm. The enzyme catalyses [ThiI sulfur-carrier protein]-S-sulfanyl-L-cysteine + a uridine in tRNA + 2 reduced [2Fe-2S]-[ferredoxin] + ATP + H(+) = [ThiI sulfur-carrier protein]-L-cysteine + a 4-thiouridine in tRNA + 2 oxidized [2Fe-2S]-[ferredoxin] + AMP + diphosphate. It catalyses the reaction [ThiS sulfur-carrier protein]-C-terminal Gly-Gly-AMP + S-sulfanyl-L-cysteinyl-[cysteine desulfurase] + AH2 = [ThiS sulfur-carrier protein]-C-terminal-Gly-aminoethanethioate + L-cysteinyl-[cysteine desulfurase] + A + AMP + 2 H(+). Its pathway is cofactor biosynthesis; thiamine diphosphate biosynthesis. Its function is as follows. Catalyzes the ATP-dependent transfer of a sulfur to tRNA to produce 4-thiouridine in position 8 of tRNAs, which functions as a near-UV photosensor. Also catalyzes the transfer of sulfur to the sulfur carrier protein ThiS, forming ThiS-thiocarboxylate. This is a step in the synthesis of thiazole, in the thiamine biosynthesis pathway. The sulfur is donated as persulfide by IscS. This Bacillus licheniformis (strain ATCC 14580 / DSM 13 / JCM 2505 / CCUG 7422 / NBRC 12200 / NCIMB 9375 / NCTC 10341 / NRRL NRS-1264 / Gibson 46) protein is Probable tRNA sulfurtransferase.